We begin with the raw amino-acid sequence, 207 residues long: Probable GTP-binding protein EngB (207 aa).

The EngB-type G domain occupies 25–202; it reads DVPEIAFVGR…ATLLWQWAHP (178 aa). GTP-binding positions include 33–40, 60–64, 82–85, 152–155, and 181–183; these read GRSNAGKS, GRTQH, DLPG, TKAD, and FSA. Mg(2+)-binding residues include Ser-40 and Thr-62.

This sequence belongs to the TRAFAC class TrmE-Era-EngA-EngB-Septin-like GTPase superfamily. EngB GTPase family. Mg(2+) serves as cofactor.

In terms of biological role, necessary for normal cell division and for the maintenance of normal septation. The chain is Probable GTP-binding protein EngB from Albidiferax ferrireducens (strain ATCC BAA-621 / DSM 15236 / T118) (Rhodoferax ferrireducens).